Reading from the N-terminus, the 208-residue chain is Large ribosomal subunit protein bL25 (208 aa).

The tract at residues 184–208 (VTISGTSSDQDTSGGESSGTTTSED) is disordered. Over residues 187 to 208 (SGTSSDQDTSGGESSGTTTSED) the composition is skewed to low complexity.

Belongs to the bacterial ribosomal protein bL25 family. CTC subfamily. In terms of assembly, part of the 50S ribosomal subunit; part of the 5S rRNA/L5/L18/L25 subcomplex. Contacts the 5S rRNA. Binds to the 5S rRNA independently of L5 and L18.

In terms of biological role, this is one of the proteins that binds to the 5S RNA in the ribosome where it forms part of the central protuberance. The sequence is that of Large ribosomal subunit protein bL25 from Ehrlichia ruminantium (strain Gardel).